Consider the following 255-residue polypeptide: Staphylococcal secretory antigen ssaA1 (255 aa).

The N-terminal stretch at 1–26 (MKKIVTATIATAGLATIAFAGHDAQA) is a signal peptide. A run of 3 repeats spans residues 75–78 (YNNY), 88–91 (YNNY), and 98–101 (YNNY). The interval 75-101 (YNNYNTYSYNNASYNNYYNHSYQYNNY) is 3 X 4 AA repeats of Y-N-N-Y. In terms of domain architecture, Peptidase C51 spans 134–255 (AAPSSNGRSI…NQAGSYNFIH (122 aa)).

It localises to the secreted. In terms of biological role, not known; immunogenic protein. The protein is Staphylococcal secretory antigen ssaA1 (ssaA1) of Staphylococcus aureus (strain MW2).